The primary structure comprises 95 residues: Large ribosomal subunit protein uL24c (95 aa).

This sequence belongs to the universal ribosomal protein uL24 family. As to quaternary structure, part of the 50S ribosomal subunit.

Its subcellular location is the plastid. The protein localises to the chloroplast. One of two assembly initiator proteins, it binds directly to the 5'-end of the 23S rRNA, where it nucleates assembly of the 50S subunit. The polypeptide is Large ribosomal subunit protein uL24c (rpl24) (Porphyra purpurea (Red seaweed)).